We begin with the raw amino-acid sequence, 137 residues long: MLVPKRVKFRRVHRGHMRGEAKGGKTVAFGEFGLQATTSSWITNRQIEAARIAMTRYMKRGGKVWIKIFPHKSYTSKGVGVRMGNGKGAPEGWVEPVKRGKVMFEVGGVPEATAREALRLAQHKLPVRTKIIAREAE.

It belongs to the universal ribosomal protein uL16 family. As to quaternary structure, part of the 50S ribosomal subunit.

Binds 23S rRNA and is also seen to make contacts with the A and possibly P site tRNAs. This chain is Large ribosomal subunit protein uL16, found in Leuconostoc citreum (strain KM20).